We begin with the raw amino-acid sequence, 153 residues long: ATP synthase subunit a (153 aa).

Helical transmembrane passes span 43 to 63 (AFHL…LLIF) and 104 to 124 (IAPL…VDLI).

The protein belongs to the ATPase A chain family. As to quaternary structure, F-type ATPases have 2 components, CF(1) - the catalytic core - and CF(0) - the membrane proton channel. CF(1) has five subunits: alpha(3), beta(3), gamma(1), delta(1), epsilon(1). CF(0) has three main subunits: a(1), b(2) and c(9-12). The alpha and beta chains form an alternating ring which encloses part of the gamma chain. CF(1) is attached to CF(0) by a central stalk formed by the gamma and epsilon chains, while a peripheral stalk is formed by the delta and b chains.

It is found in the cell inner membrane. In terms of biological role, key component of the proton channel; it plays a direct role in the translocation of protons across the membrane. The chain is ATP synthase subunit a (atpB) from Pseudomonas putida (Arthrobacter siderocapsulatus).